Consider the following 148-residue polypeptide: Small ribosomal subunit protein eS12B (148 aa).

It belongs to the eukaryotic ribosomal protein eS12 family. Component of the small ribosomal subunit (SSU). Mature yeast ribosomes consist of a small (40S) and a large (60S) subunit. The 40S small subunit contains 1 molecule of ribosomal RNA (18S rRNA) and at least 33 different proteins. The large 60S subunit contains 3 rRNA molecules (25S, 5.8S and 5S rRNA) and at least 46 different proteins.

The protein resides in the cytoplasm. Functionally, component of the ribosome, a large ribonucleoprotein complex responsible for the synthesis of proteins in the cell. The small ribosomal subunit (SSU) binds messenger RNAs (mRNAs) and translates the encoded message by selecting cognate aminoacyl-transfer RNA (tRNA) molecules. The large subunit (LSU) contains the ribosomal catalytic site termed the peptidyl transferase center (PTC), which catalyzes the formation of peptide bonds, thereby polymerizing the amino acids delivered by tRNAs into a polypeptide chain. The nascent polypeptides leave the ribosome through a tunnel in the LSU and interact with protein factors that function in enzymatic processing, targeting, and the membrane insertion of nascent chains at the exit of the ribosomal tunnel. In Schizosaccharomyces pombe (strain 972 / ATCC 24843) (Fission yeast), this protein is Small ribosomal subunit protein eS12B (rps1202).